Here is a 382-residue protein sequence, read N- to C-terminus: Proton extrusion protein PxcA (382 aa).

Helical transmembrane passes span 156–176, 257–277, 305–325, and 340–360; these read TLISLKIILLLILVPLLVQQI, AIKNVLADLAALIAFAFVCII, IILFTDMFVGFHSPEGWQVLL, and FILLFIATFPVILATIFKYWI.

Belongs to the CemA family.

It localises to the cell inner membrane. Required for H(+) efflux immediately after light irradiation to form a rapid H(+) concentration gradient across the thylakoid membranes. Together with PxcL, contributes to transient H(+) uptake following dark to light transition. This Prochlorococcus marinus (strain MIT 9313) protein is Proton extrusion protein PxcA.